A 358-amino-acid polypeptide reads, in one-letter code: Alanine racemase (358 aa).

Lysine 35 acts as the Proton acceptor; specific for D-alanine in catalysis. An N6-(pyridoxal phosphate)lysine modification is found at lysine 35. Arginine 130 contacts substrate. Tyrosine 255 functions as the Proton acceptor; specific for L-alanine in the catalytic mechanism. Position 303 (methionine 303) interacts with substrate.

Belongs to the alanine racemase family. Pyridoxal 5'-phosphate serves as cofactor.

The catalysed reaction is L-alanine = D-alanine. The protein operates within amino-acid biosynthesis; D-alanine biosynthesis; D-alanine from L-alanine: step 1/1. Catalyzes the interconversion of L-alanine and D-alanine. May also act on other amino acids. The protein is Alanine racemase (alr) of Shewanella sp. (strain MR-7).